We begin with the raw amino-acid sequence, 236 residues long: MKTIVVCSGGLDSVSLAHRTASEEQLIGLVSFDYGQRHRKELDFAAKCAARLAVPHHIIDIAAIGGHLSGSALTDNVEVPDGHYAEETMKATVVPNRNAIMLAIAFGLAAAQKADAVAVAVHGGDHFIYPDCRPGFIDAFQRMQNEALDGYASVKLLAPYVEVSKAAIVADGTRHGTPFAETWSCYKGGSLHCGRCGTCVERREAFHLAGVSDPTEYEDRDFWKAAASQYSAAEVR.

7–17 is an ATP binding site; the sequence is CSGGLDSVSLA. Residues C185, C193, C196, and C199 each coordinate Zn(2+).

Belongs to the QueC family. Requires Zn(2+) as cofactor.

The enzyme catalyses 7-carboxy-7-deazaguanine + NH4(+) + ATP = 7-cyano-7-deazaguanine + ADP + phosphate + H2O + H(+). The protein operates within purine metabolism; 7-cyano-7-deazaguanine biosynthesis. In terms of biological role, catalyzes the ATP-dependent conversion of 7-carboxy-7-deazaguanine (CDG) to 7-cyano-7-deazaguanine (preQ(0)). The polypeptide is 7-cyano-7-deazaguanine synthase (Rhizobium etli (strain ATCC 51251 / DSM 11541 / JCM 21823 / NBRC 15573 / CFN 42)).